A 251-amino-acid polypeptide reads, in one-letter code: 5-oxoprolinase subunit A (251 aa).

The protein belongs to the LamB/PxpA family. Forms a complex composed of PxpA, PxpB and PxpC.

It catalyses the reaction 5-oxo-L-proline + ATP + 2 H2O = L-glutamate + ADP + phosphate + H(+). In terms of biological role, catalyzes the cleavage of 5-oxoproline to form L-glutamate coupled to the hydrolysis of ATP to ADP and inorganic phosphate. The chain is 5-oxoprolinase subunit A from Paracidovorax citrulli (strain AAC00-1) (Acidovorax citrulli).